Here is a 298-residue protein sequence, read N- to C-terminus: GTPase Era (298 aa).

Positions 8–176 (RCGRIAVIGR…VSDLLALLPE (169 aa)) constitute an Era-type G domain. Residues 16 to 23 (GRPNVGKS) form a G1 region. 16 to 23 (GRPNVGKS) is a binding site for GTP. The interval 42 to 46 (QTTRH) is G2. Positions 63–66 (DTPG) are G3. Residues 63–67 (DTPGL) and 125–128 (NKID) each bind GTP. A G4 region spans residues 125-128 (NKID). The G5 stretch occupies residues 155–157 (VSA). Residues 199–283 (VREQVMRQLG…FLETWVRVRK (85 aa)) enclose the KH type-2 domain.

This sequence belongs to the TRAFAC class TrmE-Era-EngA-EngB-Septin-like GTPase superfamily. Era GTPase family. In terms of assembly, monomer.

Its subcellular location is the cytoplasm. The protein localises to the cell inner membrane. In terms of biological role, an essential GTPase that binds both GDP and GTP, with rapid nucleotide exchange. Plays a role in 16S rRNA processing and 30S ribosomal subunit biogenesis and possibly also in cell cycle regulation and energy metabolism. This Xylella fastidiosa (strain Temecula1 / ATCC 700964) protein is GTPase Era.